We begin with the raw amino-acid sequence, 401 residues long: tRNA(Met) cytidine acetate ligase (401 aa).

Residues 7-20 (IVEY…HLYH), Gly-101, Asn-160, and 185-186 (RI) each bind ATP.

Belongs to the TmcAL family.

The protein localises to the cytoplasm. The enzyme catalyses cytidine(34) in elongator tRNA(Met) + acetate + ATP = N(4)-acetylcytidine(34) in elongator tRNA(Met) + AMP + diphosphate. In terms of biological role, catalyzes the formation of N(4)-acetylcytidine (ac(4)C) at the wobble position of elongator tRNA(Met), using acetate and ATP as substrates. First activates an acetate ion to form acetyladenylate (Ac-AMP) and then transfers the acetyl group to tRNA to form ac(4)C34. This is tRNA(Met) cytidine acetate ligase from Geobacillus sp. (strain WCH70).